A 1529-amino-acid chain; its full sequence is Slit homolog 2 protein (1529 aa).

The N-terminal stretch at 1–30 (MRGVGWQMLSLSLGLVLAILNKVAPQACPA) is a signal peptide. Residues 31–55 (QCSCSGSTVDCHGLALRSVPRNIPR) enclose the LRRNT domain. 6 LRR repeats span residues 56-77 (NTER…DFAG), 80-101 (HLRV…AFQD), 104-125 (ELER…LFLG), 128-149 (KLYR…AFRG), 152-173 (DIKN…AFRA), and 176-197 (DLEV…SFNH). Asparagine 66 carries an N-linked (GlcNAc...) asparagine glycan. N-linked (GlcNAc...) asparagine glycosylation is present at asparagine 186. An LRRCT 1 domain is found at 209 to 259 (NNLYCDCHLAWLSDWLRQRPRVGLYTQCMGPSHLRGHNVAEVQKREFVCSG). The LRRNT 2 domain maps to 264–300 (MAPSCSVLHCPAACTCSNNIVDCRGKGLTEIPTNLPE). A disulfide bridge connects residues cysteine 277 and cysteine 286. LRR repeat units follow at residues 301–322 (TITE…AFSP), 325–346 (KLRR…AFQG), 349–370 (SLNS…LFEG), 373–394 (SLQL…AFQD), and 397–418 (NLNL…TFSP). One can recognise an LRRCT 2 domain in the interval 430-480 (NPFICDCHLKWLADYLHTNPIETSGARCTSPRRLANKRIGQIKSKKFRCSA). Intrachain disulfides connect cysteine 434–cysteine 457, cysteine 436–cysteine 478, cysteine 506–cysteine 512, and cysteine 510–cysteine 519. In terms of domain architecture, LRRNT 3 spans 497-533 (SGDCFADLACPEKCRCEGTTVDCSNQKLNKIPEHIPQ). LRR repeat units lie at residues 534–555 (YTAE…GIFK), 559–580 (QLRK…AFEG), 583–604 (GVNE…MFKG), 607–628 (SLKT…SFIG), and 631–652 (SVRL…AFDT). Residue asparagine 564 is glycosylated (N-linked (GlcNAc...) asparagine). Residue asparagine 623 is glycosylated (N-linked (GlcNAc...) asparagine). The LRRCT 3 domain maps to 664–714 (NPFNCNCYLAWLGEWLRKKRIVTGNPRCQKPYFLKEIPIQDVAIQDFTCDD). Intrachain disulfides connect cysteine 668-cysteine 691, cysteine 670-cysteine 712, cysteine 727-cysteine 733, and cysteine 731-cysteine 740. Positions 718–754 (DNSCSPLSRCPTECTCLDTVVRCSNKGLKVLPKGIPR) constitute an LRRNT 4 domain. LRR repeat units lie at residues 755-777 (DVTE…SNYK), 778-799 (HLTL…SFSN), 802-823 (QLLT…TFDG), and 826-847 (SLRL…AFND). 2 N-linked (GlcNAc...) asparagine glycosylation sites follow: asparagine 794 and asparagine 799. Residues 859-909 (NPLYCDCNMQWLSDWVKSEYKEPGIARCAGPGEMADKLLLTTPSKKFTCQG) form the LRRCT 4 domain. 20 disulfide bridges follow: cysteine 863–cysteine 886, cysteine 865–cysteine 907, cysteine 922–cysteine 933, cysteine 927–cysteine 943, cysteine 945–cysteine 954, cysteine 961–cysteine 972, cysteine 966–cysteine 984, cysteine 986–cysteine 995, cysteine 1002–cysteine 1013, cysteine 1007–cysteine 1022, cysteine 1024–cysteine 1033, cysteine 1040–cysteine 1053, cysteine 1047–cysteine 1062, cysteine 1064–cysteine 1073, cysteine 1080–cysteine 1091, cysteine 1085–cysteine 1100, cysteine 1102–cysteine 1111, cysteine 1125–cysteine 1136, cysteine 1130–cysteine 1145, and cysteine 1147–cysteine 1156. EGF-like domains follow at residues 918–955 (KCNP…QDCD) and 957–996 (PIHA…ENCE). Residues 998-1034 (NVDDCEDNDCENNSTCVDGINNYTCLCPPEYTGELCE) form the EGF-like 3; calcium-binding domain. Residues asparagine 1009, asparagine 1010, and asparagine 1019 are each glycosylated (N-linked (GlcNAc...) asparagine). An EGF-like 4 domain is found at 1036–1074 (KLDFCAQDLNPCQHDSKCILTPKGFKCDCTPGYVGEHCD). An EGF-like 5; calcium-binding domain is found at 1076–1112 (DFDDCQDNKCKNGAHCTDAVNGYTCICPEGYSGLFCE). One can recognise an EGF-like 6 domain in the interval 1121-1157 (RTSPCDNFDCQNGAQCIVRINEPICQCLPGYQGEKCE). Residues 1160-1333 (VSVNFINKES…PMQTGILPGC (174 aa)) enclose the Laminin G-like domain. N-linked (GlcNAc...) asparagine glycosylation is found at asparagine 1183, asparagine 1266, and asparagine 1300. Cystine bridges form between cysteine 1307–cysteine 1333, cysteine 1336–cysteine 1346, cysteine 1341–cysteine 1356, cysteine 1358–cysteine 1367, cysteine 1375–cysteine 1385, cysteine 1380–cysteine 1395, cysteine 1397–cysteine 1406, cysteine 1416–cysteine 1426, cysteine 1421–cysteine 1436, cysteine 1438–cysteine 1447, cysteine 1453–cysteine 1492, cysteine 1471–cysteine 1506, cysteine 1482–cysteine 1522, and cysteine 1486–cysteine 1524. An EGF-like 7 domain is found at 1332 to 1368 (GCEPCHKKVCAHGTCQPSSQAGFTCECQEGWMGPLCD). In terms of domain architecture, CTCK spans 1453–1528 (CRGERIRDYY…VVKCGCTRCV (76 aa)).

In terms of assembly, interacts with GREM1. Homodimer. Binds ROBO1 and ROBO2 with high affinity. In terms of tissue distribution, fetal lung and kidney, and adult spinal cord. Weak expression in adult adrenal gland, thyroid, trachea and other tissues examined.

The protein resides in the secreted. Functionally, thought to act as molecular guidance cue in cellular migration, and function appears to be mediated by interaction with roundabout homolog receptors. During neural development involved in axonal navigation at the ventral midline of the neural tube and projection of axons to different regions. SLIT1 and SLIT2 seem to be essential for midline guidance in the forebrain by acting as repulsive signal preventing inappropriate midline crossing by axons projecting from the olfactory bulb. In spinal cord development may play a role in guiding commissural axons once they reached the floor plate by modulating the response to netrin. In vitro, silences the attractive effect of NTN1 but not its growth-stimulatory effect and silencing requires the formation of a ROBO1-DCC complex. May be implicated in spinal cord midline post-crossing axon repulsion. In vitro, only commissural axons that crossed the midline responded to SLIT2. In the developing visual system appears to function as repellent for retinal ganglion axons by providing a repulsion that directs these axons along their appropriate paths prior to, and after passage through, the optic chiasm. In vitro, collapses and repels retinal ganglion cell growth cones. Seems to play a role in branching and arborization of CNS sensory axons, and in neuronal cell migration. In vitro, Slit homolog 2 protein N-product, but not Slit homolog 2 protein C-product, repels olfactory bulb (OB) but not dorsal root ganglia (DRG) axons, induces OB growth cones collapse and induces branching of DRG axons. Seems to be involved in regulating leukocyte migration. This is Slit homolog 2 protein (SLIT2) from Homo sapiens (Human).